Reading from the N-terminus, the 286-residue chain is CDP-diacylglycerol--serine O-phosphatidyltransferase (286 aa).

6 helical membrane passes run 15 to 35, 74 to 94, 95 to 115, 135 to 155, 167 to 187, and 207 to 227; these read ILPS…IKFA, IDSL…LYVS, MLSK…CVVL, EFFV…LLAL, GWFL…GIPM, and LAIC…VIII.

The protein belongs to the CDP-alcohol phosphatidyltransferase class-I family.

The protein localises to the cell membrane. The enzyme catalyses a CDP-1,2-diacyl-sn-glycerol + L-serine = a 1,2-diacyl-sn-glycero-3-phospho-L-serine + CMP + H(+). The polypeptide is CDP-diacylglycerol--serine O-phosphatidyltransferase (pssA) (Mycobacterium tuberculosis (strain ATCC 25618 / H37Rv)).